Consider the following 844-residue polypeptide: Beta-mannosidase B (844 aa).

Glu-432 functions as the Proton donor in the catalytic mechanism. An N-linked (GlcNAc...) asparagine glycan is attached at Asn-723.

Belongs to the glycosyl hydrolase 2 family. Beta-mannosidase B subfamily.

The catalysed reaction is Hydrolysis of terminal, non-reducing beta-D-mannose residues in beta-D-mannosides.. The protein operates within glycan metabolism; N-glycan degradation. Its function is as follows. Exoglycosidase that cleaves the single beta-linked mannose residue from the non-reducing end of beta-mannosidic oligosaccharides of various complexity and length. Prefers mannobiose over mannotriose and has no activity against polymeric mannan. Is also severely restricted by galactosyl substitutions at the +1 subsite. The protein is Beta-mannosidase B (mndB) of Aspergillus flavus (strain ATCC 200026 / FGSC A1120 / IAM 13836 / NRRL 3357 / JCM 12722 / SRRC 167).